Here is a 409-residue protein sequence, read N- to C-terminus: Ingression protein 1 (409 aa).

Positions 1 to 114 (MSEEVWNGNQ…DPKEGYCTWY (114 aa)) constitute a C2 domain. Positions 300-409 (LSYDEDDDDD…TRKRPPPRLS (110 aa)) are disordered. The span at 302–313 (YDEDDDDDDEND) shows a compositional bias: acidic residues. Positions 315–328 (FYSSSHRVSHNYNQ) are enriched in polar residues. Positions 360–377 (LDSSSPNSHPHPSGLNSP) are enriched in low complexity. Residues 384-399 (TTSNSNFNSRKNSMSP) show a composition bias toward polar residues. Residue S392 is modified to Phosphoserine. Over residues 400 to 409 (TRKRPPPRLS) the composition is skewed to basic residues.

It belongs to the INN1/fic1 family. Interacts with CYK2, CYK3 and IQG1.

The protein localises to the bud neck. Its function is as follows. Required for the ingression of the plasma membrane into the bud neck at the end of cytokinesis, leading to the separation of the mother and daughter cells. Stimulates the synthesis of the primary septum (PS) by CHS2. The protein is Ingression protein 1 (INN1) of Saccharomyces cerevisiae (strain ATCC 204508 / S288c) (Baker's yeast).